A 494-amino-acid polypeptide reads, in one-letter code: tRNA (guanine(37)-N(1))-methyltransferase (494 aa).

Residues 1–32 (MRIRRILYFYGNLPNTYTANVLRRLAFSCWHT) constitute a mitochondrion transit peptide. S-adenosyl-L-methionine-binding positions include histidine 278, 316-317 (DL), 344-345 (DG), and asparagine 377. The segment at 468–494 (DTGEPESKRPRTAEAFPLPHVQQSRNS) is disordered.

This sequence belongs to the class I-like SAM-binding methyltransferase superfamily. TRM5/TYW2 family. Monomer.

The protein localises to the mitochondrion matrix. Its subcellular location is the nucleus. The protein resides in the cytoplasm. It catalyses the reaction guanosine(37) in tRNA + S-adenosyl-L-methionine = N(1)-methylguanosine(37) in tRNA + S-adenosyl-L-homocysteine + H(+). Functionally, involved in mitochondrial tRNA methylation. Specifically methylates the N1 position of guanosine-37 in various tRNAs. Methylation is not dependent on the nature of the nucleoside 5' of the target nucleoside. This is the first step in the biosynthesis of wybutosine (yW), a modified base adjacent to the anticodon of tRNAs and required for accurate decoding. This Xenopus tropicalis (Western clawed frog) protein is tRNA (guanine(37)-N(1))-methyltransferase (trmt5).